A 591-amino-acid polypeptide reads, in one-letter code: Nuclear receptor subfamily 4 group A member 2 (591 aa).

2 disordered regions span residues 1-22 (MPCV…SQSY) and 110-133 (SEEM…SSTP). Over residues 8 to 22 (YGSSPQGASPASQSY) the composition is skewed to low complexity. A DNA-binding region (nuclear receptor) is located at residues 253–328 (EGLCAVCGDN…VGMVKEVVRT (76 aa)). NR C4-type zinc fingers lie at residues 256 to 276 (CAVC…CEGC) and 292 to 311 (CLAN…CQYC). Positions 280–307 (FKRTVQKNAKYVCLANKNCPVDKRRRNR) match the Bipartite nuclear localization signal (NLS1) motif. Residues 330–354 (SLKGRRGRLPSKPKSPQEPSPPSPP) form a disordered region. The short motif at 331–343 (LKGRRGRLPSKPK) is the Nuclear localization signal (NLS1) element. The span at 345-354 (PQEPSPPSPP) shows a compositional bias: pro residues. The region spanning 353 to 588 (PPVSLISALV…AIIDKLFLDT (236 aa)) is the NR LBD domain. The nuclear export sequence (NES1) motif lies at 436 to 445 (FLELFVLRLA). A nuclear export sequence (NES2) motif is present at residues 561–570 (QGLQRIFYLK).

The protein belongs to the nuclear hormone receptor family.

The protein localises to the cytoplasm. It localises to the nucleus. Transcriptional regulator which may play a role in the differentiation and maintenance of meso-diencephalic dopaminergic (mdDA) neurons. The protein is Nuclear receptor subfamily 4 group A member 2 (nr4a2) of Xenopus tropicalis (Western clawed frog).